The sequence spans 197 residues: uncharacterized protein (197 aa).

A helical membrane pass occupies residues 103–123 (LAIVLPVLANLIMCAMLAWYL).

The protein resides in the host membrane. This is an uncharacterized protein from Equus caballus (Horse).